A 154-amino-acid chain; its full sequence is Ribonuclease 8 (154 aa).

Positions 1 to 27 are cleaved as a signal peptide; it reads MAPARAGCCPLLLLLLGLWVAEVLVRA. Catalysis depends on H42, which acts as the Proton acceptor. Cystine bridges form between C50–C93, C64–C118, C82–C133, and C89–C96. Residues 65–69 and K90 contribute to the substrate site; that span reads KDLNT. H149 functions as the Proton donor in the catalytic mechanism.

It belongs to the pancreatic ribonuclease family. Expressed prominently in the placenta and is not detected in any other tissues examined.

It localises to the secreted. Its function is as follows. Has a low ribonuclease activity. The protein is Ribonuclease 8 (RNASE8) of Homo sapiens (Human).